Here is a 371-residue protein sequence, read N- to C-terminus: Queuine tRNA-ribosyltransferase (371 aa).

Catalysis depends on Asp-90, which acts as the Proton acceptor. Residues 90–94 (DSGGF), Asp-144, Gln-189, and Gly-215 each bind substrate. The interval 246–252 (GVGTPEN) is RNA binding. Residue Asp-265 is the Nucleophile of the active site. Positions 270–274 (TRNAR) are RNA binding; important for wobble base 34 recognition. 4 residues coordinate Zn(2+): Cys-303, Cys-305, Cys-308, and His-334.

The protein belongs to the queuine tRNA-ribosyltransferase family. Homodimer. Within each dimer, one monomer is responsible for RNA recognition and catalysis, while the other monomer binds to the replacement base PreQ1. Zn(2+) is required as a cofactor.

The enzyme catalyses 7-aminomethyl-7-carbaguanine + guanosine(34) in tRNA = 7-aminomethyl-7-carbaguanosine(34) in tRNA + guanine. Its pathway is tRNA modification; tRNA-queuosine biosynthesis. Its function is as follows. Catalyzes the base-exchange of a guanine (G) residue with the queuine precursor 7-aminomethyl-7-deazaguanine (PreQ1) at position 34 (anticodon wobble position) in tRNAs with GU(N) anticodons (tRNA-Asp, -Asn, -His and -Tyr). Catalysis occurs through a double-displacement mechanism. The nucleophile active site attacks the C1' of nucleotide 34 to detach the guanine base from the RNA, forming a covalent enzyme-RNA intermediate. The proton acceptor active site deprotonates the incoming PreQ1, allowing a nucleophilic attack on the C1' of the ribose to form the product. After dissociation, two additional enzymatic reactions on the tRNA convert PreQ1 to queuine (Q), resulting in the hypermodified nucleoside queuosine (7-(((4,5-cis-dihydroxy-2-cyclopenten-1-yl)amino)methyl)-7-deazaguanosine). This chain is Queuine tRNA-ribosyltransferase, found in Helicobacter pylori (strain HPAG1).